The sequence spans 208 residues: GATA transcription factor 29 (208 aa).

Residues 155–208 (GMKKCTNMNCNALNTPMWRRGPLGPKSLCNACGIKFRKEEERKAKRNVVIVLDD) form a GATA-type; atypical zinc finger.

It belongs to the type IV zinc-finger family. Class B subfamily.

Its subcellular location is the nucleus. Its function is as follows. Transcriptional regulator that specifically binds 5'-GATA-3' or 5'-GAT-3' motifs within gene promoters. The protein is GATA transcription factor 29 (GATA29) of Arabidopsis thaliana (Mouse-ear cress).